The primary structure comprises 416 residues: cAMP-dependent protein kinase type II-beta regulatory subunit (416 aa).

The segment at 2–151 (SIEIPAGLTE…RLQEACKDIL (150 aa)) is dimerization and phosphorylation. Residues 53-97 (HEGRTWGDAGAAAGGGTPSKGVNFAEEPMRSDSENGEEEEAAEAG) are disordered. Position 69 is a phosphothreonine (T69). Phosphoserine occurs at positions 83, 85, and 112. 3',5'-cyclic AMP contacts are provided by residues 152–273 (LFKN…ESLP), E221, R230, 274–416 (FLKS…EPTA), E350, and R359.

It belongs to the cAMP-dependent kinase regulatory chain family. In terms of assembly, the inactive form of the enzyme is composed of two regulatory chains and two catalytic chains. Activation by cAMP produces two active catalytic monomers and a regulatory dimer that binds four cAMP molecules. Interacts with PRKACA and PRKACB. Interacts with the phosphorylated form of PJA2. Forms a complex composed of PRKAR2B, GSK3B and GSKIP through GSKIP interaction; facilitates PKA-induced phosphorylation and regulates GSK3B activity. Phosphorylated by the activated catalytic chain. Four types of regulatory chains are found: I-alpha, I-beta, II-alpha, and II-beta. Their expression varies among tissues and is in some cases constitutive and in others inducible. Brain. Present in a few pyramidal neurons and mostly in mossy fibers. Colocalizes with PJA2 in dentate granule cells and at postsynaptic sites of primary hippocampal neurons.

It is found in the cytoplasm. The protein resides in the cell membrane. Regulatory subunit of the cAMP-dependent protein kinases involved in cAMP signaling in cells. Type II regulatory chains mediate membrane association by binding to anchoring proteins, including the MAP2 kinase. This Rattus norvegicus (Rat) protein is cAMP-dependent protein kinase type II-beta regulatory subunit (Prkar2b).